Consider the following 363-residue polypeptide: Chorismate synthase (363 aa).

Residues arginine 48 and arginine 54 each coordinate NADP(+). Residues 125-127 (RSS), 237-238 (NA), glycine 277, 292-296 (KPTSS), and arginine 318 contribute to the FMN site.

Belongs to the chorismate synthase family. Homotetramer. The cofactor is FMNH2.

It catalyses the reaction 5-O-(1-carboxyvinyl)-3-phosphoshikimate = chorismate + phosphate. It functions in the pathway metabolic intermediate biosynthesis; chorismate biosynthesis; chorismate from D-erythrose 4-phosphate and phosphoenolpyruvate: step 7/7. In terms of biological role, catalyzes the anti-1,4-elimination of the C-3 phosphate and the C-6 proR hydrogen from 5-enolpyruvylshikimate-3-phosphate (EPSP) to yield chorismate, which is the branch point compound that serves as the starting substrate for the three terminal pathways of aromatic amino acid biosynthesis. This reaction introduces a second double bond into the aromatic ring system. The sequence is that of Chorismate synthase from Ectopseudomonas mendocina (strain ymp) (Pseudomonas mendocina).